The chain runs to 195 residues: uncharacterized protein (195 aa).

Residues 10–70 enclose the HTH tetR-type domain; it reads EETVARLLQA…ATAYEVLRRQ (61 aa). Positions 33–52 form a DNA-binding region, H-T-H motif; it reads SAAVITKRAGVSVGALFRHF.

This is an uncharacterized protein from Mycobacterium tuberculosis (strain CDC 1551 / Oshkosh).